The sequence spans 238 residues: Uridylate kinase (238 aa).

12-15 (KLSG) is a binding site for ATP. Glycine 54 is a binding site for UMP. Positions 55 and 59 each coordinate ATP. UMP contacts are provided by residues aspartate 74 and 135–142 (TGNPYFST). Tyrosine 168 and aspartate 171 together coordinate ATP.

This sequence belongs to the UMP kinase family. As to quaternary structure, homohexamer.

It localises to the cytoplasm. It carries out the reaction UMP + ATP = UDP + ADP. It functions in the pathway pyrimidine metabolism; CTP biosynthesis via de novo pathway; UDP from UMP (UMPK route): step 1/1. Its activity is regulated as follows. Inhibited by UTP. Functionally, catalyzes the reversible phosphorylation of UMP to UDP. The protein is Uridylate kinase of Syntrophomonas wolfei subsp. wolfei (strain DSM 2245B / Goettingen).